Reading from the N-terminus, the 1138-residue chain is Exportin-6-B (1138 aa).

An Importin N-terminal domain is found at 31–97 (IESLLNNFAQ…RSSLPKLLLS (67 aa)). Over residues 291–307 (SVTTNTTSSVVNGGSSS) the composition is skewed to low complexity. Positions 291 to 315 (SVTTNTTSSVVNGGSSSPPLHSAAP) are disordered.

This sequence belongs to the exportin family.

The protein resides in the nucleus. It is found in the cytoplasm. Mediates the nuclear export of actin and profilin-actin complexes in somatic cells. Oocyte nuclei lack active actin export. Its function is as follows. Mediates the nuclear export of actin and profilin-actin complexes in somatic cells. This is Exportin-6-B (xpo6-b) from Xenopus laevis (African clawed frog).